The primary structure comprises 143 residues: Putative pre-16S rRNA nuclease (143 aa).

Belongs to the YqgF nuclease family.

The protein localises to the cytoplasm. In terms of biological role, could be a nuclease involved in processing of the 5'-end of pre-16S rRNA. The chain is Putative pre-16S rRNA nuclease from Lactococcus lactis subsp. cremoris (strain MG1363).